Consider the following 1059-residue polypeptide: Carbamoyl phosphate synthase large chain (1059 aa).

The interval 1-401 (MPKRKDIQKI…SLLKACRSLE (401 aa)) is carboxyphosphate synthetic domain. Residues R129, R169, G175, G176, R208, I210, E215, G241, I242, H243, Q284, and E298 each coordinate ATP. Positions 133–327 (KQLMEELGQP…IAKLAAKIAV (195 aa)) constitute an ATP-grasp 1 domain. Mg(2+) is bound by residues Q284, E298, and N300. Positions 284, 298, and 300 each coordinate Mn(2+). An oligomerization domain region spans residues 402–546 (VCVDHNELPA…YSTYGFENES (145 aa)). The segment at 547–929 (VKSSKESVLV…ALYKAFEASY (383 aa)) is carbamoyl phosphate synthetic domain. In terms of domain architecture, ATP-grasp 2 spans 671-861 (EQALKELDIP…MAQVATRLIL (191 aa)). 10 residues coordinate ATP: R707, S746, I748, E752, G777, V778, H779, S780, Q820, and E832. Mg(2+) is bound by residues Q820, E832, and N834. Q820, E832, and N834 together coordinate Mn(2+). In terms of domain architecture, MGS-like spans 930-1059 (LHLPNFGNIV…ESRSFTTEAI (130 aa)). Residues 930–1059 (LHLPNFGNIV…ESRSFTTEAI (130 aa)) are allosteric domain.

The protein belongs to the CarB family. In terms of assembly, composed of two chains; the small (or glutamine) chain promotes the hydrolysis of glutamine to ammonia, which is used by the large (or ammonia) chain to synthesize carbamoyl phosphate. Tetramer of heterodimers (alpha,beta)4. Mg(2+) serves as cofactor. Mn(2+) is required as a cofactor.

It catalyses the reaction hydrogencarbonate + L-glutamine + 2 ATP + H2O = carbamoyl phosphate + L-glutamate + 2 ADP + phosphate + 2 H(+). The catalysed reaction is hydrogencarbonate + NH4(+) + 2 ATP = carbamoyl phosphate + 2 ADP + phosphate + 2 H(+). The protein operates within amino-acid biosynthesis; L-arginine biosynthesis; carbamoyl phosphate from bicarbonate: step 1/1. It functions in the pathway pyrimidine metabolism; UMP biosynthesis via de novo pathway; (S)-dihydroorotate from bicarbonate: step 1/3. Functionally, large subunit of the glutamine-dependent carbamoyl phosphate synthetase (CPSase). CPSase catalyzes the formation of carbamoyl phosphate from the ammonia moiety of glutamine, carbonate, and phosphate donated by ATP, constituting the first step of 2 biosynthetic pathways, one leading to arginine and/or urea and the other to pyrimidine nucleotides. The large subunit (synthetase) binds the substrates ammonia (free or transferred from glutamine from the small subunit), hydrogencarbonate and ATP and carries out an ATP-coupled ligase reaction, activating hydrogencarbonate by forming carboxy phosphate which reacts with ammonia to form carbamoyl phosphate. This is Carbamoyl phosphate synthase large chain from Streptococcus sanguinis (strain SK36).